Reading from the N-terminus, the 1024-residue chain is Protein sumv-1 (1024 aa).

6 disordered regions span residues 447–486 (DASQFGGGKKKQRLPPRRSPSFGTSPNSYQFHQQSQKKMP), 501–564 (NFQG…RRGV), 577–617 (PSRH…RSQA), 645–664 (SQMAGQRPGMTPSAQQGSPQ), 710–739 (VRSGSSSSVAGPSRSSVASGSQHTALDTVQ), and 773–1024 (AGNS…EEEL). Polar residues-rich tracts occupy residues 467 to 486 (SFGTSPNSYQFHQQSQKKMP), 501 to 514 (NFQGWKNQSTSSAT), and 528 to 542 (RSQQPKMIPLEQTQD). Positions 584 to 600 (SPLTPSTSTSSSQLLAP) are enriched in low complexity. The segment covering 605-617 (QPGTSSQTFRSQA) has biased composition (polar residues). 2 stretches are compositionally biased toward low complexity: residues 710–730 (VRSGSSSSVAGPSRSSVASGS) and 784–809 (AGAPGAKESSKAAGGAQKGTSAASTS). Residues 810-832 (VPEPTKSSESSVDPQSDVSFSNP) are compositionally biased toward polar residues. Residues 859-870 (TLASESTSSEAT) are compositionally biased toward low complexity. The span at 873–883 (HDTTSSSSAET) shows a compositional bias: polar residues. Residues 903–914 (PEKEKEKIDRPK) show a composition bias toward basic and acidic residues. Composition is skewed to low complexity over residues 916–943 (PKSSTKRTTPTPSGRTPRAAAIAANQAI), 952–962 (SASTSSSAAST), and 970–986 (LLAELSVAAAAEEQQQA). Positions 987–998 (IGSTSKNGGSTK) are enriched in polar residues.

It localises to the nucleus. The protein localises to the cytoplasm. Its subcellular location is the cell projection. It is found in the axon. Nuclear factor that influences the activity of genes involved in vulval development. The sequence is that of Protein sumv-1 from Caenorhabditis elegans.